The primary structure comprises 468 residues: MKMPLNIGLVHFIGIGGIGMSGIAEVLHNLGYHVQGSDQSDSANVQRLREKGIEVFVGHKAENIGDAEVVVVSTAIKKNNPELVAAREKLLPIVRRAEMLAELMRFRHAVAIGGTHGKTTTTSMVAALLDAGHLDPTVINGGIINAYGTNARMGDGDWMVVEADESDGTFLKLPADIAVVTNIDPEHLDHYGNFENVRAAFAQFVENVPFYGFGVMCLDHPEVQALVSRIEDRRIVTYGQNPQADVRFVNHRMDGAASLFDVVIRSRKGEATEIKDLRLPMPGQHNVSNATAAIAVAHELGISADDIRRGLGSFGGVKRRFTHTGTWNGVEIFDDYGHHPVEIRAVLKAAREATKGRVVAIVQPHRYTRLASLFDEFAACFNDADTVIVTPVYTAGEDPIEGVNSEALVSRIKTAGHRDARYASGPEALAPLVASIAEPGDFVVCLGAGNITQWAYALPKELAEQGKK.

114-120 (GTHGKTT) is an ATP binding site.

This sequence belongs to the MurCDEF family.

The protein resides in the cytoplasm. It catalyses the reaction UDP-N-acetyl-alpha-D-muramate + L-alanine + ATP = UDP-N-acetyl-alpha-D-muramoyl-L-alanine + ADP + phosphate + H(+). It participates in cell wall biogenesis; peptidoglycan biosynthesis. Its function is as follows. Cell wall formation. The sequence is that of UDP-N-acetylmuramate--L-alanine ligase from Brucella anthropi (strain ATCC 49188 / DSM 6882 / CCUG 24695 / JCM 21032 / LMG 3331 / NBRC 15819 / NCTC 12168 / Alc 37) (Ochrobactrum anthropi).